Here is a 339-residue protein sequence, read N- to C-terminus: Fructose-1,6-bisphosphatase class 1 (339 aa).

Glutamate 92, aspartate 114, leucine 116, and aspartate 117 together coordinate Mg(2+). Substrate-binding positions include 117-120 (DGSS), asparagine 213, and lysine 279. Glutamate 285 provides a ligand contact to Mg(2+).

It belongs to the FBPase class 1 family. Homotetramer. It depends on Mg(2+) as a cofactor.

The protein resides in the cytoplasm. The enzyme catalyses beta-D-fructose 1,6-bisphosphate + H2O = beta-D-fructose 6-phosphate + phosphate. Its pathway is carbohydrate biosynthesis; gluconeogenesis. This Acidovorax sp. (strain JS42) protein is Fructose-1,6-bisphosphatase class 1.